Here is a 156-residue protein sequence, read N- to C-terminus: 6,7-dimethyl-8-ribityllumazine synthase (156 aa).

5-amino-6-(D-ribitylamino)uracil is bound by residues Phe23, 57–59, and 81–83; these read AYE and AII. 86-87 contributes to the (2S)-2-hydroxy-3-oxobutyl phosphate binding site; sequence GT. The active-site Proton donor is the His89. Phe114 serves as a coordination point for 5-amino-6-(D-ribitylamino)uracil. Residue Arg128 participates in (2S)-2-hydroxy-3-oxobutyl phosphate binding.

The protein belongs to the DMRL synthase family.

The enzyme catalyses (2S)-2-hydroxy-3-oxobutyl phosphate + 5-amino-6-(D-ribitylamino)uracil = 6,7-dimethyl-8-(1-D-ribityl)lumazine + phosphate + 2 H2O + H(+). The protein operates within cofactor biosynthesis; riboflavin biosynthesis; riboflavin from 2-hydroxy-3-oxobutyl phosphate and 5-amino-6-(D-ribitylamino)uracil: step 1/2. Catalyzes the formation of 6,7-dimethyl-8-ribityllumazine by condensation of 5-amino-6-(D-ribitylamino)uracil with 3,4-dihydroxy-2-butanone 4-phosphate. This is the penultimate step in the biosynthesis of riboflavin. The sequence is that of 6,7-dimethyl-8-ribityllumazine synthase from Helicobacter pylori (strain J99 / ATCC 700824) (Campylobacter pylori J99).